Here is a 33-residue protein sequence, read N- to C-terminus: Cytochrome b6-f complex subunit 8 (33 aa).

Residues 2-22 (LFTLAWASLAAVFSFSIAMVV) form a helical membrane-spanning segment.

The protein belongs to the PetN family. As to quaternary structure, the 4 large subunits of the cytochrome b6-f complex are cytochrome b6, subunit IV (17 kDa polypeptide, PetD), cytochrome f and the Rieske protein, while the 4 small subunits are PetG, PetL, PetM and PetN. The complex functions as a dimer.

It is found in the cellular thylakoid membrane. Functionally, component of the cytochrome b6-f complex, which mediates electron transfer between photosystem II (PSII) and photosystem I (PSI), cyclic electron flow around PSI, and state transitions. This Prochlorococcus marinus (strain MIT 9303) protein is Cytochrome b6-f complex subunit 8.